The chain runs to 309 residues: UDP-3-O-acyl-N-acetylglucosamine deacetylase (309 aa).

Residues His-78, His-237, and Asp-241 each contribute to the Zn(2+) site. His-264 serves as the catalytic Proton donor.

The protein belongs to the LpxC family. Zn(2+) serves as cofactor.

It catalyses the reaction a UDP-3-O-[(3R)-3-hydroxyacyl]-N-acetyl-alpha-D-glucosamine + H2O = a UDP-3-O-[(3R)-3-hydroxyacyl]-alpha-D-glucosamine + acetate. The protein operates within glycolipid biosynthesis; lipid IV(A) biosynthesis; lipid IV(A) from (3R)-3-hydroxytetradecanoyl-[acyl-carrier-protein] and UDP-N-acetyl-alpha-D-glucosamine: step 2/6. In terms of biological role, catalyzes the hydrolysis of UDP-3-O-myristoyl-N-acetylglucosamine to form UDP-3-O-myristoylglucosamine and acetate, the committed step in lipid A biosynthesis. This is UDP-3-O-acyl-N-acetylglucosamine deacetylase from Methylobacillus flagellatus (strain ATCC 51484 / DSM 6875 / VKM B-1610 / KT).